A 358-amino-acid polypeptide reads, in one-letter code: Phosphoribosylformylglycinamidine cyclo-ligase (358 aa).

This sequence belongs to the AIR synthase family.

It is found in the cytoplasm. The catalysed reaction is 2-formamido-N(1)-(5-O-phospho-beta-D-ribosyl)acetamidine + ATP = 5-amino-1-(5-phospho-beta-D-ribosyl)imidazole + ADP + phosphate + H(+). It functions in the pathway purine metabolism; IMP biosynthesis via de novo pathway; 5-amino-1-(5-phospho-D-ribosyl)imidazole from N(2)-formyl-N(1)-(5-phospho-D-ribosyl)glycinamide: step 2/2. The sequence is that of Phosphoribosylformylglycinamidine cyclo-ligase from Nitrosococcus oceani (strain ATCC 19707 / BCRC 17464 / JCM 30415 / NCIMB 11848 / C-107).